We begin with the raw amino-acid sequence, 299 residues long: MKPDAHQVKQFLLNLQDTICQQLSAVDGAEFVEDSWQREAGGGGRSRVLRNGGVFEQAGVNFSHVHGEAMPASATAHRPELAGRSFEAMGVSLVVHPHNPYVPTSHANVRFFIAEKPGAEPVWWFGGGFDLTPFYGFEEDAIHWHRTARDLCLPFGEDVYPRYKKWCDEYFYLKHRNEQRGIGGLFFDDLNTPDFDHCFAFMQAVGKGYTDAYLPIVERRKAMAYGERERNFQLYRRGRYVEFNLVWDRGTLFGLQTGGRTESILMSMPPLVRWEYDYQPKDGSPEAALSEFIKVRDWV.

Serine 92 provides a ligand contact to substrate. The Mn(2+) site is built by histidine 96 and histidine 106. Histidine 106 acts as the Proton donor in catalysis. 108–110 serves as a coordination point for substrate; sequence NVR. 2 residues coordinate Mn(2+): histidine 145 and histidine 175. The segment at 240-275 is important for dimerization; the sequence is YVEFNLVWDRGTLFGLQTGGRTESILMSMPPLVRWE. 258 to 260 is a binding site for substrate; sequence GGR.

Belongs to the aerobic coproporphyrinogen-III oxidase family. In terms of assembly, homodimer. It depends on Mn(2+) as a cofactor.

It is found in the cytoplasm. The enzyme catalyses coproporphyrinogen III + O2 + 2 H(+) = protoporphyrinogen IX + 2 CO2 + 2 H2O. The protein operates within porphyrin-containing compound metabolism; protoporphyrin-IX biosynthesis; protoporphyrinogen-IX from coproporphyrinogen-III (O2 route): step 1/1. Involved in the heme biosynthesis. Catalyzes the aerobic oxidative decarboxylation of propionate groups of rings A and B of coproporphyrinogen-III to yield the vinyl groups in protoporphyrinogen-IX. This chain is Oxygen-dependent coproporphyrinogen-III oxidase, found in Escherichia coli O127:H6 (strain E2348/69 / EPEC).